A 367-amino-acid polypeptide reads, in one-letter code: Inactive serine protease 39 (367 aa).

The signal sequence occupies residues 1-31; the sequence is MWGSRAQQSGPDRGGACLLAAFLLCFSLLHA. The 245-residue stretch at 68 to 312 folds into the Peptidase S1 domain; it reads IYGGQIAKAE…FSDWIKQKKA (245 aa). Cystine bridges form between C93–C109, C192–C269, C225–C248, and C259–C287.

This sequence belongs to the peptidase S1 family. In terms of tissue distribution, expressed in testis. More specifically, abundantly expressed in the haploid round spermatid.

It localises to the cytoplasmic vesicle. The protein resides in the secretory vesicle. Its subcellular location is the acrosome. It is found in the secreted. In terms of biological role, may play an important role in the sperm/egg interaction; released during the acrosome reaction. The protein is Inactive serine protease 39 (Prss39) of Mus musculus (Mouse).